Reading from the N-terminus, the 310-residue chain is tRNA pseudouridine synthase B (310 aa).

The active-site Nucleophile is D49.

This sequence belongs to the pseudouridine synthase TruB family. Type 1 subfamily.

It catalyses the reaction uridine(55) in tRNA = pseudouridine(55) in tRNA. Its function is as follows. Responsible for synthesis of pseudouridine from uracil-55 in the psi GC loop of transfer RNAs. This chain is tRNA pseudouridine synthase B, found in Sinorhizobium medicae (strain WSM419) (Ensifer medicae).